Consider the following 414-residue polypeptide: MATAAAETLGLLWGWLWSESFWLPQNVSWADLEGPGDGYGYPRAQHVLSVFPLAVCIFSVRMLFERFIAKPCALRVGIKDSPVNKVEPNDTLEKVFVSVTKYPDEKRLKGLSKQLDWSVRKIQCWFRHRRNQDKPPTLTKFCESMWRFTYYLCIFCYGIRFLWSMPWFWDTRQCWYNYPYQPLSRELYYYYITQLAFYWSLMFSQFIDVKRKDFLMMFIHHMIGIMLTTFSYVNNMVRVGALIFCLHDFADPLLEAAKMANYARRERLCTTLFVIFGAAFIVSRLAIFPLWILNTTLFESWEIIGPYPSWWLFNALLLILQVLHAIWSYLIVQTASKALSRGKVSKDDRSDVESSSEEEDETTHKNNLSGSSSSNGANCMNGYMGGSHLAEEQGTCKATGNLHFRASPHLHSCD.

Over 1-43 the chain is Lumenal; sequence MATAAAETLGLLWGWLWSESFWLPQNVSWADLEGPGDGYGYPR. N-linked (GlcNAc...) asparagine glycosylation is present at asparagine 26. Residues 44–64 form a helical membrane-spanning segment; the sequence is AQHVLSVFPLAVCIFSVRMLF. The segment at 75–136 is homeobox-like; that stretch reads RVGIKDSPVN…RHRRNQDKPP (62 aa). One can recognise a TLC domain in the interval 139-340; that stretch reads TKFCESMWRF…IVQTASKALS (202 aa). Helical transmembrane passes span 148–168, 187–207, 214–234, and 272–292; these read FTYY…MPWF, LYYY…SQFI, FLMM…SYVN, and LFVI…PLWI. The Last loop motif signature appears at 299-309; the sequence is ESWEIIGPYPS. A helical transmembrane segment spans residues 312–332; sequence LFNALLLILQVLHAIWSYLIV. The Cytoplasmic portion of the chain corresponds to 333–414; it reads QTASKALSRG…RASPHLHSCD (82 aa). The tract at residues 347 to 373 is disordered; the sequence is DDRSDVESSSEEEDETTHKNNLSGSSS.

As to quaternary structure, interacts with PAQR4; the interaction regulates the stability and activity of CERS5 and is inhibited in presence of ceramides. In terms of processing, phosphorylated at the C-terminus by CK2. Ubiquitously expressed, with highest levels in testis and kidney. Expressed in pulmonary epithelia.

Its subcellular location is the endoplasmic reticulum membrane. It catalyses the reaction a sphingoid base + hexadecanoyl-CoA = an N-hexadecanoyl-sphingoid base + CoA + H(+). It carries out the reaction sphinganine + hexadecanoyl-CoA = N-hexadecanoylsphinganine + CoA + H(+). The enzyme catalyses hexadecasphinganine + hexadecanoyl-CoA = N-hexadecanoylhexadecasphinganine + CoA + H(+). The catalysed reaction is sphing-4-enine + hexadecanoyl-CoA = N-hexadecanoylsphing-4-enine + CoA + H(+). It catalyses the reaction 2-hydroxyhexadecanoyl-CoA + sphinganine = N-(2-hydroxyhexadecanoyl)-sphinganine + CoA + H(+). It carries out the reaction sphinganine + tetradecanoyl-CoA = N-(tetradecanoyl)-sphinganine + CoA + H(+). The enzyme catalyses sphinganine + octadecanoyl-CoA = N-(octadecanoyl)-sphinganine + CoA + H(+). The catalysed reaction is sphinganine + (9Z)-octadecenoyl-CoA = N-(9Z-octadecenoyl)-sphinganine + CoA + H(+). It catalyses the reaction a fatty acyl-CoA + sphing-4-enine = an N-acylsphing-4-enine + CoA + H(+). It carries out the reaction tetracosenoyl-CoA + sphing-4-enine = N-(tetracosenoyl)-sphing-4-enine + CoA + H(+). The protein operates within lipid metabolism; sphingolipid metabolism. With respect to regulation, inhibited by fumonisin B1. In terms of biological role, ceramide synthase that catalyzes the transfer of the acyl chain from acyl-CoA to a sphingoid base, with high selectivity toward palmitoyl-CoA (hexadecanoyl-CoA; C16:0-CoA). Can use other acyl donors, but with less efficiency. N-acylates sphinganine and sphingosine bases to form dihydroceramides and ceramides in de novo synthesis and salvage pathways, respectively. Plays a role in de novo ceramide synthesis and surfactant homeostasis in pulmonary epithelia. The polypeptide is Ceramide synthase 5 (Mus musculus (Mouse)).